We begin with the raw amino-acid sequence, 344 residues long: Anthranilate phosphoribosyltransferase (344 aa).

Residues glycine 81, 84-85 (GD), serine 89, 91-94 (NIST), 109-117 (KHGNRALSS), and alanine 121 each bind 5-phospho-alpha-D-ribose 1-diphosphate. Glycine 81 contributes to the anthranilate binding site. Serine 93 contributes to the Mg(2+) binding site. Residue asparagine 112 coordinates anthranilate. Arginine 167 serves as a coordination point for anthranilate. Residues aspartate 226 and glutamate 227 each contribute to the Mg(2+) site.

The protein belongs to the anthranilate phosphoribosyltransferase family. Homodimer. It depends on Mg(2+) as a cofactor.

The enzyme catalyses N-(5-phospho-beta-D-ribosyl)anthranilate + diphosphate = 5-phospho-alpha-D-ribose 1-diphosphate + anthranilate. Its pathway is amino-acid biosynthesis; L-tryptophan biosynthesis; L-tryptophan from chorismate: step 2/5. Its function is as follows. Catalyzes the transfer of the phosphoribosyl group of 5-phosphorylribose-1-pyrophosphate (PRPP) to anthranilate to yield N-(5'-phosphoribosyl)-anthranilate (PRA). This is Anthranilate phosphoribosyltransferase from Azorhizobium caulinodans (strain ATCC 43989 / DSM 5975 / JCM 20966 / LMG 6465 / NBRC 14845 / NCIMB 13405 / ORS 571).